We begin with the raw amino-acid sequence, 543 residues long: Chaperonin GroEL (543 aa).

ATP contacts are provided by residues 29 to 32, 86 to 90, Gly413, 476 to 478, and Asp492; these read TLGP, DGTTT, and NAA.

Belongs to the chaperonin (HSP60) family. As to quaternary structure, forms a cylinder of 14 subunits composed of two heptameric rings stacked back-to-back. Interacts with the co-chaperonin GroES.

It localises to the cytoplasm. It carries out the reaction ATP + H2O + a folded polypeptide = ADP + phosphate + an unfolded polypeptide.. In terms of biological role, together with its co-chaperonin GroES, plays an essential role in assisting protein folding. The GroEL-GroES system forms a nano-cage that allows encapsulation of the non-native substrate proteins and provides a physical environment optimized to promote and accelerate protein folding. This Brevibacillus choshinensis protein is Chaperonin GroEL.